The following is a 221-amino-acid chain: UPF0758 protein Ent638_0101 (221 aa).

Residues 99–221 (PLLSPEMTKD…YVSFAEQGWI (123 aa)) form the MPN domain. Residues H170, H172, and D183 each contribute to the Zn(2+) site. The JAMM motif signature appears at 170-183 (HNHPSGCAEPSKAD).

The protein belongs to the UPF0758 family. YicR subfamily.

This chain is UPF0758 protein Ent638_0101, found in Enterobacter sp. (strain 638).